Here is a 191-residue protein sequence, read N- to C-terminus: Zinc finger protein GIS2 (191 aa).

The segment at 55 to 77 (FKCHYCFRNFPTSQALGGHQNAH) adopts a C2H2-type zinc-finger fold.

Expressed in inflorescence meristems, floral meristems and stem epidermis.

The protein localises to the nucleus. In terms of biological role, probable transcription factor required for the initiation of inflorescence trichomes in response to gibberellin and cytokinin. Is not involved in the regulation of trichome branching. Is functionally equivalent to ZFP8. The protein is Zinc finger protein GIS2 (GIS2) of Arabidopsis thaliana (Mouse-ear cress).